The sequence spans 472 residues: Uronate isomerase (472 aa).

This sequence belongs to the metallo-dependent hydrolases superfamily. Uronate isomerase family.

The catalysed reaction is D-glucuronate = D-fructuronate. The enzyme catalyses aldehydo-D-galacturonate = keto-D-tagaturonate. Its pathway is carbohydrate metabolism; pentose and glucuronate interconversion. The sequence is that of Uronate isomerase from Halalkalibacterium halodurans (strain ATCC BAA-125 / DSM 18197 / FERM 7344 / JCM 9153 / C-125) (Bacillus halodurans).